A 392-amino-acid chain; its full sequence is uncharacterized protein (392 aa).

Belongs to the hcp1 family.

This is an uncharacterized protein from Escherichia coli (strain K12).